The chain runs to 220 residues: 7-cyano-7-deazaguanine synthase 1 (220 aa).

10–20 (FSGGIDSTVLL) is a binding site for ATP. Residues C183, C191, C194, and C197 each contribute to the Zn(2+) site.

This sequence belongs to the QueC family. Homodimer. Zn(2+) is required as a cofactor.

The enzyme catalyses 7-carboxy-7-deazaguanine + NH4(+) + ATP = 7-cyano-7-deazaguanine + ADP + phosphate + H2O + H(+). The protein operates within purine metabolism; 7-cyano-7-deazaguanine biosynthesis. In terms of biological role, catalyzes the ATP-dependent conversion of 7-carboxy-7-deazaguanine (CDG) to 7-cyano-7-deazaguanine (preQ(0)). This chain is 7-cyano-7-deazaguanine synthase 1, found in Desulfitobacterium hafniense (strain Y51).